A 184-amino-acid polypeptide reads, in one-letter code: UPF0397 protein SAS2570 (184 aa).

5 consecutive transmembrane segments (helical) span residues 11-31 (VVAI…VVIP), 44-64 (AFLA…TGLV), 77-97 (AWWS…WIGL), 111-131 (MIYF…LIAP), and 148-168 (QGVI…TILL).

This sequence belongs to the UPF0397 family.

The protein localises to the cell membrane. The sequence is that of UPF0397 protein SAS2570 from Staphylococcus aureus (strain MSSA476).